A 115-amino-acid polypeptide reads, in one-letter code: uncharacterized protein (115 aa).

This is an uncharacterized protein from Haemophilus influenzae (strain ATCC 51907 / DSM 11121 / KW20 / Rd).